The primary structure comprises 389 residues: Arrestin-C (389 aa).

The interval 369–389 (AQQEPSGESQEALAAEGNEGS) is disordered.

This sequence belongs to the arrestin family. In terms of assembly, homodimer; disulfide-linked in response to retinal illumination. Interacts with CXCR4; the interaction is dependent on the C-terminal phosphorylation of CXCR4 and modulates the calcium ion mobilization activity of CXCR4. Interacts with GPR84. As to expression, expressed in cone photoreceptors in the retina (at protein level).

It localises to the photoreceptor inner segment. Its subcellular location is the cell projection. The protein localises to the cilium. The protein resides in the photoreceptor outer segment. Functionally, may play a role in an as yet undefined retina-specific signal transduction. Could bind to photoactivated-phosphorylated red/green opsins. The polypeptide is Arrestin-C (ARR3) (Bos taurus (Bovine)).